A 161-amino-acid chain; its full sequence is MVAMEAMAAMEVMVAAMAATADTVASSAASATATEATVAMDTASLSLPLQLSPRSLPQSSLSATAATVATDTVVSSADTEVSDTEDSAATVSATASLSMLPQSSPRSLPQSSLSATAATVDSVTDMADTAMDTKQFISKGNEHFFAASYLCAWADQSAAGS.

Interacts with ospA protein from B.burgdorferi. Post-translationally, glycosylated. In terms of tissue distribution, specifically expressed in gut. Localizes predominantly in the intercellular spaces and luminal surface of the gut. In the gut, it localizes along tight junctions. Not expressed in salivary gland or hemolymph.

It localises to the cell membrane. In terms of biological role, serves as a receptor for ospA protein of B.burgdorferi, the Lyme disease agent. Required for spirochetal colonization. Essential for pathogen adherence to the vector. This chain is Tick receptor for ospA (TROSPA), found in Ixodes scapularis (Black-legged tick).